Consider the following 871-residue polypeptide: Alanine--tRNA ligase (871 aa).

Zn(2+) contacts are provided by histidine 559, histidine 563, cysteine 661, and histidine 665.

It belongs to the class-II aminoacyl-tRNA synthetase family. The cofactor is Zn(2+).

It is found in the cytoplasm. The enzyme catalyses tRNA(Ala) + L-alanine + ATP = L-alanyl-tRNA(Ala) + AMP + diphosphate. Catalyzes the attachment of alanine to tRNA(Ala) in a two-step reaction: alanine is first activated by ATP to form Ala-AMP and then transferred to the acceptor end of tRNA(Ala). Also edits incorrectly charged Ser-tRNA(Ala) and Gly-tRNA(Ala) via its editing domain. The sequence is that of Alanine--tRNA ligase from Aquifex pyrophilus.